A 495-amino-acid chain; its full sequence is UPF0371 protein CE2832 (495 aa).

This sequence belongs to the UPF0371 family.

The sequence is that of UPF0371 protein CE2832 from Corynebacterium efficiens (strain DSM 44549 / YS-314 / AJ 12310 / JCM 11189 / NBRC 100395).